Here is a 380-residue protein sequence, read N- to C-terminus: Glucose-1-phosphate adenylyltransferase (380 aa).

Alpha-D-glucose 1-phosphate is bound by residues G164, 179-180 (EK), and S190.

It belongs to the bacterial/plant glucose-1-phosphate adenylyltransferase family. As to quaternary structure, homotetramer.

It carries out the reaction alpha-D-glucose 1-phosphate + ATP + H(+) = ADP-alpha-D-glucose + diphosphate. Its pathway is glycan biosynthesis; glycogen biosynthesis. Functionally, involved in the biosynthesis of ADP-glucose, a building block required for the elongation reactions to produce glycogen. Catalyzes the reaction between ATP and alpha-D-glucose 1-phosphate (G1P) to produce pyrophosphate and ADP-Glc. The polypeptide is Glucose-1-phosphate adenylyltransferase (Streptococcus pneumoniae (strain 70585)).